Reading from the N-terminus, the 140-residue chain is Small ribosomal subunit protein uS12 (140 aa).

Disordered regions lie at residues 36–56 and 117–140; these read TYNPSPYKRGVCTRVGTMTPK and TSGVEKRRQQRSGYGAKRPKEKKE.

It belongs to the universal ribosomal protein uS12 family. In terms of assembly, part of the 30S ribosomal subunit. Contacts proteins S8 and S17. May interact with IF1 in the 30S initiation complex.

In terms of biological role, with S4 and S5 plays an important role in translational accuracy. Its function is as follows. Interacts with and stabilizes bases of the 16S rRNA that are involved in tRNA selection in the A site and with the mRNA backbone. Located at the interface of the 30S and 50S subunits, it traverses the body of the 30S subunit contacting proteins on the other side and probably holding the rRNA structure together. The combined cluster of proteins S8, S12 and S17 appears to hold together the shoulder and platform of the 30S subunit. The polypeptide is Small ribosomal subunit protein uS12 (Malacoplasma penetrans (strain HF-2) (Mycoplasma penetrans)).